A 109-amino-acid polypeptide reads, in one-letter code: Nucleoid-associated protein Cvib_1034 (109 aa).

This sequence belongs to the YbaB/EbfC family. As to quaternary structure, homodimer.

It is found in the cytoplasm. The protein localises to the nucleoid. In terms of biological role, binds to DNA and alters its conformation. May be involved in regulation of gene expression, nucleoid organization and DNA protection. In Chlorobium phaeovibrioides (strain DSM 265 / 1930) (Prosthecochloris vibrioformis (strain DSM 265)), this protein is Nucleoid-associated protein Cvib_1034.